The primary structure comprises 702 residues: Threonine--tRNA ligase (702 aa).

The segment at 1-30 (MSAPVHPVPGADGGDPLRPATPGLRSPQVP) is disordered. A TGS domain is found at 15–84 (DPLRPATPGL…DVDVEVTPVP (70 aa)). Residues 279–585 (DHRKLGIELD…LTEHYAGAFP (307 aa)) form a catalytic region. The Zn(2+) site is built by cysteine 384, histidine 435, and histidine 562.

The protein belongs to the class-II aminoacyl-tRNA synthetase family. In terms of assembly, homodimer. It depends on Zn(2+) as a cofactor.

The protein resides in the cytoplasm. The enzyme catalyses tRNA(Thr) + L-threonine + ATP = L-threonyl-tRNA(Thr) + AMP + diphosphate + H(+). In terms of biological role, catalyzes the attachment of threonine to tRNA(Thr) in a two-step reaction: L-threonine is first activated by ATP to form Thr-AMP and then transferred to the acceptor end of tRNA(Thr). Also edits incorrectly charged L-seryl-tRNA(Thr). The chain is Threonine--tRNA ligase from Mycobacterium leprae (strain Br4923).